The sequence spans 645 residues: Sodium-dependent nutrient amino acid transporter 1 (645 aa).

Positions 1–48 are disordered; that stretch reads MELKTMPHNGANGSPQHNNNNNSNNNNNVSSDTKTDNNEKEAQKKDEG. Topologically, residues 1–51 are cytoplasmic; the sequence is MELKTMPHNGANGSPQHNNNNNSNNNNNVSSDTKTDNNEKEAQKKDEGRTN. The span at 18 to 32 shows a compositional bias: low complexity; sequence NNNNNSNNNNNVSSD. Residues 33–48 show a composition bias toward basic and acidic residues; that stretch reads TKTDNNEKEAQKKDEG. 3 helical membrane-spanning segments follow: residues 52–72, 85–105, and 138–158; these read WSNG…LGNV, GAFL…MYYL, and TICI…YLFV. N191 and N205 each carry an N-linked (GlcNAc...) asparagine glycan. 7 helical membrane-spanning segments follow: residues 234–254, 264–284, 313–333, 347–367, 407–427, 454–474, and 480–500; these read IPDW…FLVI, AAYF…GRAV, AVVQ…MFAS, IVTT…FAIL, LFSV…IVAL, CGFL…LTLV, and TYVV…IYGL. A glycan (N-linked (GlcNAc...) asparagine) is linked at N514. Transmembrane regions (helical) follow at residues 522–542 and 559–579; these read CWSF…MATI and AGWL…WWYI.

It belongs to the sodium:neurotransmitter symporter (SNF) (TC 2.A.22) family.

The protein resides in the membrane. Its function is as follows. Unusual broad substrate spectrum amino acid:sodium cotransporter that promotes absorption of the D isomers of essential amino acids. Neutral amino acids are the preferred substrates, especially methionine and phenylalanine. This chain is Sodium-dependent nutrient amino acid transporter 1, found in Drosophila mojavensis (Fruit fly).